Here is a 186-residue protein sequence, read N- to C-terminus: Glutathione peroxidase 7 (186 aa).

The N-terminal stretch at 1–18 (MVAAVATAWLLLWAAACA) is a signal peptide. Residue Cys-56 is part of the active site.

This sequence belongs to the glutathione peroxidase family.

Its subcellular location is the secreted. It carries out the reaction 2 glutathione + H2O2 = glutathione disulfide + 2 H2O. In terms of biological role, it protects esophageal epithelia from hydrogen peroxide-induced oxidative stress. It suppresses acidic bile acid-induced reactive oxygen species (ROS) and protects against oxidative DNA damage and double-strand breaks. The sequence is that of Glutathione peroxidase 7 (Gpx7) from Mus musculus (Mouse).